Reading from the N-terminus, the 404-residue chain is S-adenosylmethionine synthase (404 aa).

Residues 1–13 (MSQSRYFFTSESV) show a composition bias toward polar residues. Residues 1–20 (MSQSRYFFTSESVSEGHPDK) are disordered. His17 is a binding site for ATP. A Mg(2+)-binding site is contributed by Asp19. Glu45 lines the K(+) pocket. The L-methionine site is built by Glu58 and Gln101. The tract at residues 101-111 (QSPDINRGVDR) is flexible loop. ATP-binding positions include 172-174 (DAK), 245-246 (RF), Asp254, 260-261 (RK), Ala277, and Lys281. Asp254 is an L-methionine binding site. Lys285 contacts L-methionine.

The protein belongs to the AdoMet synthase family. In terms of assembly, homotetramer; dimer of dimers. Mg(2+) serves as cofactor. The cofactor is K(+).

The protein resides in the cytoplasm. The catalysed reaction is L-methionine + ATP + H2O = S-adenosyl-L-methionine + phosphate + diphosphate. The protein operates within amino-acid biosynthesis; S-adenosyl-L-methionine biosynthesis; S-adenosyl-L-methionine from L-methionine: step 1/1. In terms of biological role, catalyzes the formation of S-adenosylmethionine (AdoMet) from methionine and ATP. The overall synthetic reaction is composed of two sequential steps, AdoMet formation and the subsequent tripolyphosphate hydrolysis which occurs prior to release of AdoMet from the enzyme. In Chlorobium limicola (strain DSM 245 / NBRC 103803 / 6330), this protein is S-adenosylmethionine synthase.